The chain runs to 250 residues: Vacuolar iron transporter 1 (250 aa).

Topologically, residues 1–37 (MSSEEDKITRISIEPEKQTLLDHHTEKHFTAGEIVRD) are cytoplasmic. A helical transmembrane segment spans residues 38-58 (IIIGVSDGLTVPFALAAGLSG). Over 59-64 (ANASSS) the chain is Vacuolar. The helical transmembrane segment at 65-85 (IVLTAGIAEVAAGAISMGLGG) threads the bilayer. At 86 to 169 (YLAAKSEEDH…PDPKRALQSA (84 aa)) the chain is on the cytoplasmic side. Positions 91 to 166 (SEEDHYAREM…LEKPDPKRAL (76 aa)) are cytoplasmic metal binding domain (MBD). Fe cation is bound by residues glutamate 103, glutamate 106, glutamate 114, glutamate 117, methionine 150, and glutamate 154. Residues 170 to 190 (FTIAIAYVLGGFIPLLPYMLI) traverse the membrane as a helical segment. Residues 191–192 (PH) are Vacuolar-facing. Residues 193–213 (AMDAVVASVVITLFALFIFGY) form a helical membrane-spanning segment. At 214 to 227 (AKGHFTGSKPLRSA) the chain is on the cytoplasmic side. The chain crosses the membrane as a helical span at residues 228-248 (FETAFIGAIASAAAFCLAKVV). At 249–250 (QH) the chain is on the vacuolar side.

The protein belongs to the CCC1 family. Homodimer. The dimeric interaction is mediated by both the transmembrane domains (TMDs) and the cytoplasmic metal binding domain (MBD). As to expression, highly expressed in developing embryo and seed. Expressed in young seedlings, predominantly in the vasculature.

It localises to the vacuole membrane. The catalysed reaction is Fe(2+)(in) = Fe(2+)(out). In terms of biological role, vacuolar iron transporter involved in the transfer of iron ions from the cytosol to the vacuole for intracellular iron storage. Involved in regulation of cellular iron homeostasis. Vacuolar iron storage is required for seed embryo and seedling development. The polypeptide is Vacuolar iron transporter 1 (Arabidopsis thaliana (Mouse-ear cress)).